Consider the following 149-residue polypeptide: SKP1-like protein 14 (149 aa).

An interaction with the F-box domain of F-box proteins region spans residues 91–149; it reads LLAANYLNIKGLLDLSAQTVADRIKDKTPEEIREIFNIENDFTPEEEAAVRKENAWAFE.

This sequence belongs to the SKP1 family. As to quaternary structure, part of a SCF (SKP1-cullin-F-box) protein ligase complex. Interacts with CPR1/CPR30, At3g61590, At4g39550 and At5g49610. In terms of tissue distribution, restricted to inflorescences, pollen and leaves.

It is found in the nucleus. The protein operates within protein modification; protein ubiquitination. In terms of biological role, involved in ubiquitination and subsequent proteasomal degradation of target proteins. Together with CUL1, RBX1 and a F-box protein, it forms a SCF E3 ubiquitin ligase complex. The functional specificity of this complex depends on the type of F-box protein. In the SCF complex, it serves as an adapter that links the F-box protein to CUL1. The chain is SKP1-like protein 14 (ASK14) from Arabidopsis thaliana (Mouse-ear cress).